A 159-amino-acid polypeptide reads, in one-letter code: Flagellar assembly factor FliW (159 aa).

The protein belongs to the FliW family. Interacts with translational regulator CsrA and flagellin(s).

The protein localises to the cytoplasm. Acts as an anti-CsrA protein, binds CsrA and prevents it from repressing translation of its target genes, one of which is flagellin. Binds to flagellin and participates in the assembly of the flagellum. In Geobacter sulfurreducens (strain ATCC 51573 / DSM 12127 / PCA), this protein is Flagellar assembly factor FliW.